The following is a 560-amino-acid chain: NAD-dependent malic enzyme (560 aa).

The active-site Proton donor is Tyr-100. Arg-153 lines the NAD(+) pocket. The Proton acceptor role is filled by Lys-171. Positions 242, 243, and 266 each coordinate a divalent metal cation. NAD(+)-binding residues include Asp-266 and Asn-413.

It belongs to the malic enzymes family. Homotetramer. Mg(2+) serves as cofactor. Mn(2+) is required as a cofactor.

The enzyme catalyses (S)-malate + NAD(+) = pyruvate + CO2 + NADH. It carries out the reaction oxaloacetate + H(+) = pyruvate + CO2. The sequence is that of NAD-dependent malic enzyme from Psychrobacter cryohalolentis (strain ATCC BAA-1226 / DSM 17306 / VKM B-2378 / K5).